A 131-amino-acid chain; its full sequence is MATRHQVRQAVVSLLYAHEMGSEMNEFKDEFLEEKKIRNERKIQALETFDAICLKKGELDEILKPYLKEKDIERIGIVELAILRLGVYEMKFTGTDKAVIINEAIELAKELGGDSAPKFINGVLDALKGEM.

It belongs to the NusB family.

Its function is as follows. Involved in transcription antitermination. Required for transcription of ribosomal RNA (rRNA) genes. Binds specifically to the boxA antiterminator sequence of the ribosomal RNA (rrn) operons. The sequence is that of Transcription antitermination protein NusB from Campylobacter curvus (strain 525.92).